The chain runs to 202 residues: LexA repressor (202 aa).

A DNA-binding region (H-T-H motif) is located at residues 28–48; the sequence is IAEIARAIGVSSPHGVREQLR. Catalysis depends on for autocatalytic cleavage activity residues S120 and K157.

The protein belongs to the peptidase S24 family. In terms of assembly, homodimer.

The enzyme catalyses Hydrolysis of Ala-|-Gly bond in repressor LexA.. Its function is as follows. Represses a number of genes involved in the response to DNA damage (SOS response), including recA and lexA. In the presence of single-stranded DNA, RecA interacts with LexA causing an autocatalytic cleavage which disrupts the DNA-binding part of LexA, leading to derepression of the SOS regulon and eventually DNA repair. The sequence is that of LexA repressor from Methylococcus capsulatus (strain ATCC 33009 / NCIMB 11132 / Bath).